The following is a 466-amino-acid chain: Adenosylhomocysteinase (466 aa).

Thr57, Asp132, and Glu192 together coordinate substrate. NAD(+) is bound at residue Thr193–Thr195. 2 residues coordinate substrate: Lys222 and Asp226. NAD(+)-binding positions include Asn227, Gly256 to Gly261, Glu279, Asn314, Ile335 to His337, and Asn380.

The protein belongs to the adenosylhomocysteinase family. It depends on NAD(+) as a cofactor.

It localises to the cytoplasm. The catalysed reaction is S-adenosyl-L-homocysteine + H2O = L-homocysteine + adenosine. It functions in the pathway amino-acid biosynthesis; L-homocysteine biosynthesis; L-homocysteine from S-adenosyl-L-homocysteine: step 1/1. Its function is as follows. May play a key role in the regulation of the intracellular concentration of adenosylhomocysteine. This is Adenosylhomocysteinase from Rhizobium etli (strain ATCC 51251 / DSM 11541 / JCM 21823 / NBRC 15573 / CFN 42).